The primary structure comprises 604 residues: Putative ankyrin repeat protein L56 (604 aa).

ANK repeat units lie at residues 77-106 (IDRY…DILV), 135-164 (FFKS…NADG), 166-189 (LSAC…YDDN), 190-219 (TIYH…EDKR), 221-247 (NVFI…KWKI), 248-277 (DVEF…DSKY), 314-341 (KFSK…NENV), 342-371 (DLRE…EFTD), 380-410 (EHIT…SRSY), 445-474 (YSQA…DIKP), 475-504 (ITNI…DITI), 505-534 (NDNR…DIRT), and 535-565 (DDDY…EPSN).

The sequence is that of Putative ankyrin repeat protein L56 from Acanthamoeba polyphaga (Amoeba).